A 151-amino-acid chain; its full sequence is Large ribosomal subunit protein bL9 (151 aa).

It belongs to the bacterial ribosomal protein bL9 family.

Binds to the 23S rRNA. The polypeptide is Large ribosomal subunit protein bL9 (Lacticaseibacillus casei (strain BL23) (Lactobacillus casei)).